The sequence spans 481 residues: Probable Xaa-Pro aminopeptidase PEPP (481 aa).

Mn(2+)-binding residues include aspartate 265, aspartate 276, glutamate 399, and glutamate 439.

The protein belongs to the peptidase M24B family. Mn(2+) serves as cofactor.

It catalyses the reaction Release of any N-terminal amino acid, including proline, that is linked to proline, even from a dipeptide or tripeptide.. Catalyzes the removal of a penultimate prolyl residue from the N-termini of peptides. In Uncinocarpus reesii (strain UAMH 1704), this protein is Probable Xaa-Pro aminopeptidase PEPP (PEPP).